The chain runs to 487 residues: 6-phosphogluconate dehydrogenase, decarboxylating 3, chloroplastic (487 aa).

N-acetylmethionine is present on M1. NADP(+) contacts are provided by residues 13–18 (GLAVMG), 36–38 (NRT), 80–82 (VKA), and N108. Residues N108 and 134-136 (SGG) contribute to the substrate site. The active-site Proton acceptor is K188. A substrate-binding site is contributed by 191-192 (HN). E195 acts as the Proton donor in catalysis. Substrate is bound by residues Y196, K266, R293, R458, and H464.

The protein belongs to the 6-phosphogluconate dehydrogenase family. In terms of assembly, forms homodimer. Forms heterodimers with PGD1 or PGD2.

It is found in the plastid. The protein localises to the chloroplast. The protein resides in the cytoplasm. Its subcellular location is the cytosol. The catalysed reaction is 6-phospho-D-gluconate + NADP(+) = D-ribulose 5-phosphate + CO2 + NADPH. It participates in carbohydrate degradation; pentose phosphate pathway; D-ribulose 5-phosphate from D-glucose 6-phosphate (oxidative stage): step 3/3. Functionally, catalyzes the oxidative decarboxylation of 6-phosphogluconate to ribulose 5-phosphate and CO(2), with concomitant reduction of NADP to NADPH. The sequence is that of 6-phosphogluconate dehydrogenase, decarboxylating 3, chloroplastic from Arabidopsis thaliana (Mouse-ear cress).